The sequence spans 479 residues: Aspartyl/glutamyl-tRNA(Asn/Gln) amidotransferase subunit B (479 aa).

This sequence belongs to the GatB/GatE family. GatB subfamily. In terms of assembly, heterotrimer of A, B and C subunits.

The catalysed reaction is L-glutamyl-tRNA(Gln) + L-glutamine + ATP + H2O = L-glutaminyl-tRNA(Gln) + L-glutamate + ADP + phosphate + H(+). The enzyme catalyses L-aspartyl-tRNA(Asn) + L-glutamine + ATP + H2O = L-asparaginyl-tRNA(Asn) + L-glutamate + ADP + phosphate + 2 H(+). Functionally, allows the formation of correctly charged Asn-tRNA(Asn) or Gln-tRNA(Gln) through the transamidation of misacylated Asp-tRNA(Asn) or Glu-tRNA(Gln) in organisms which lack either or both of asparaginyl-tRNA or glutaminyl-tRNA synthetases. The reaction takes place in the presence of glutamine and ATP through an activated phospho-Asp-tRNA(Asn) or phospho-Glu-tRNA(Gln). The protein is Aspartyl/glutamyl-tRNA(Asn/Gln) amidotransferase subunit B of Mesoplasma florum (strain ATCC 33453 / NBRC 100688 / NCTC 11704 / L1) (Acholeplasma florum).